The following is a 249-amino-acid chain: Triosephosphate isomerase (249 aa).

Positions 12 and 14 each coordinate substrate. Lys14 carries the post-translational modification N6-acetyllysine. Position 68 is a 3'-nitrotyrosine (Tyr68). Ser80 carries the phosphoserine modification. The active-site Electrophile is the His96. Phosphoserine is present on Ser106. Residue Lys142 forms a Glycyl lysine isopeptide (Lys-Gly) (interchain with G-Cter in SUMO1) linkage. N6-succinyllysine is present on Lys149. An N6-acetyllysine; alternate modification is found at Lys156. Lys156 carries the N6-succinyllysine; alternate modification. Ser159 is modified (phosphoserine). Glu166 serves as the catalytic Proton acceptor. The residue at position 173 (Thr173) is a Phosphothreonine. At Lys194 the chain carries N6-acetyllysine; alternate. Residue Lys194 is modified to N6-succinyllysine; alternate. The residue at position 194 (Lys194) is an N6-methyllysine; alternate. Ser198 carries the phosphoserine modification. Residue Tyr209 is modified to 3'-nitrotyrosine. Ser212 is subject to Phosphoserine. Residue Thr214 is modified to Phosphothreonine. The residue at position 223 (Ser223) is a Phosphoserine. Lys238 carries the N6-acetyllysine modification.

This sequence belongs to the triosephosphate isomerase family. Homodimer.

The protein localises to the cytoplasm. It carries out the reaction dihydroxyacetone phosphate = methylglyoxal + phosphate. It catalyses the reaction D-glyceraldehyde 3-phosphate = dihydroxyacetone phosphate. It participates in carbohydrate degradation; glycolysis; D-glyceraldehyde 3-phosphate from glycerone phosphate: step 1/1. Its pathway is carbohydrate biosynthesis; gluconeogenesis. In terms of biological role, triosephosphate isomerase is an extremely efficient metabolic enzyme that catalyzes the interconversion between dihydroxyacetone phosphate (DHAP) and D-glyceraldehyde-3-phosphate (G3P) in glycolysis and gluconeogenesis. Its function is as follows. It is also responsible for the non-negligible production of methylglyoxal a reactive cytotoxic side-product that modifies and can alter proteins, DNA and lipids. The chain is Triosephosphate isomerase (TPI1) from Bos taurus (Bovine).